Here is a 493-residue protein sequence, read N- to C-terminus: Cytochrome P450 2E1 (493 aa).

298–303 serves as a coordination point for substrate; sequence FAGTET. Residue cysteine 437 coordinates heme.

The protein belongs to the cytochrome P450 family. Interacts with chaperones HSP70 and HSP90; this interaction is required for initial targeting to mitochondria. Heme is required as a cofactor.

The protein resides in the endoplasmic reticulum membrane. The protein localises to the microsome membrane. It localises to the mitochondrion inner membrane. The enzyme catalyses an organic molecule + reduced [NADPH--hemoprotein reductase] + O2 = an alcohol + oxidized [NADPH--hemoprotein reductase] + H2O + H(+). It catalyses the reaction (5Z,8Z,11Z)-eicosatrienoate + reduced [NADPH--hemoprotein reductase] + O2 = 19-hydroxy-(5Z,8Z,11Z)-eicosatrienoate + oxidized [NADPH--hemoprotein reductase] + H2O + H(+). It carries out the reaction (5Z,8Z,11Z,14Z,17Z)-eicosapentaenoate + reduced [NADPH--hemoprotein reductase] + O2 = 19-hydroxy-(5Z,8Z,11Z,14Z,17Z)-eicosapentaenoate + oxidized [NADPH--hemoprotein reductase] + H2O + H(+). The catalysed reaction is (4Z,7Z,10Z,13Z,16Z,19Z)-docosahexaenoate + reduced [NADPH--hemoprotein reductase] + O2 = 21-hydroxy-(4Z,7Z,10Z,13Z,16Z,19Z)-docosahexaenoate + oxidized [NADPH--hemoprotein reductase] + H2O + H(+). The enzyme catalyses dodecanoate + reduced [NADPH--hemoprotein reductase] + O2 = 11-hydroxydodecanoate + oxidized [NADPH--hemoprotein reductase] + H2O + H(+). It catalyses the reaction tetradecanoate + reduced [NADPH--hemoprotein reductase] + O2 = 13-hydroxytetradecanoate + oxidized [NADPH--hemoprotein reductase] + H2O + H(+). It carries out the reaction 4-nitrophenol + NADPH + O2 + H(+) = 4-nitrocatechol + NADP(+) + H2O. The protein operates within lipid metabolism; fatty acid metabolism. With respect to regulation, the omega-1 hydroxylase activity is stimulated by cytochrome b5. Functionally, a cytochrome P450 monooxygenase involved in the metabolism of fatty acids. Mechanistically, uses molecular oxygen inserting one oxygen atom into a substrate, and reducing the second into a water molecule, with two electrons provided by NADPH via cytochrome P450 reductase (NADPH--hemoprotein reductase). Catalyzes the hydroxylation of carbon-hydrogen bonds. Hydroxylates fatty acids specifically at the omega-1 position displaying the highest catalytic activity for saturated fatty acids. May be involved in the oxidative metabolism of xenobiotics. In Rattus norvegicus (Rat), this protein is Cytochrome P450 2E1.